The sequence spans 346 residues: 4-hydroxy-3-methylbut-2-enyl diphosphate reductase (346 aa).

Cys-19 is a binding site for [4Fe-4S] cluster. Residues His-48 and His-84 each coordinate (2E)-4-hydroxy-3-methylbut-2-enyl diphosphate. Dimethylallyl diphosphate is bound by residues His-48 and His-84. The isopentenyl diphosphate site is built by His-48 and His-84. Cys-106 contacts [4Fe-4S] cluster. His-134 is a binding site for (2E)-4-hydroxy-3-methylbut-2-enyl diphosphate. His-134 contributes to the dimethylallyl diphosphate binding site. His-134 is a binding site for isopentenyl diphosphate. Glu-136 (proton donor) is an active-site residue. Position 175 (Thr-175) interacts with (2E)-4-hydroxy-3-methylbut-2-enyl diphosphate. Cys-205 is a binding site for [4Fe-4S] cluster. 4 residues coordinate (2E)-4-hydroxy-3-methylbut-2-enyl diphosphate: Ser-233, Ser-234, Asn-235, and Ser-278. Positions 233, 234, 235, and 278 each coordinate dimethylallyl diphosphate. 4 residues coordinate isopentenyl diphosphate: Ser-233, Ser-234, Asn-235, and Ser-278.

The protein belongs to the IspH family. Requires [4Fe-4S] cluster as cofactor.

The enzyme catalyses isopentenyl diphosphate + 2 oxidized [2Fe-2S]-[ferredoxin] + H2O = (2E)-4-hydroxy-3-methylbut-2-enyl diphosphate + 2 reduced [2Fe-2S]-[ferredoxin] + 2 H(+). It carries out the reaction dimethylallyl diphosphate + 2 oxidized [2Fe-2S]-[ferredoxin] + H2O = (2E)-4-hydroxy-3-methylbut-2-enyl diphosphate + 2 reduced [2Fe-2S]-[ferredoxin] + 2 H(+). It participates in isoprenoid biosynthesis; dimethylallyl diphosphate biosynthesis; dimethylallyl diphosphate from (2E)-4-hydroxy-3-methylbutenyl diphosphate: step 1/1. Its pathway is isoprenoid biosynthesis; isopentenyl diphosphate biosynthesis via DXP pathway; isopentenyl diphosphate from 1-deoxy-D-xylulose 5-phosphate: step 6/6. In terms of biological role, catalyzes the conversion of 1-hydroxy-2-methyl-2-(E)-butenyl 4-diphosphate (HMBPP) into a mixture of isopentenyl diphosphate (IPP) and dimethylallyl diphosphate (DMAPP). Acts in the terminal step of the DOXP/MEP pathway for isoprenoid precursor biosynthesis. The chain is 4-hydroxy-3-methylbut-2-enyl diphosphate reductase from Brucella melitensis biotype 1 (strain ATCC 23456 / CCUG 17765 / NCTC 10094 / 16M).